A 128-amino-acid chain; its full sequence is Small ribosomal subunit protein uS9 (128 aa).

Over residues 97–113 the composition is skewed to basic and acidic residues; the sequence is RSEGFMTRDSRSVERKK. The tract at residues 97-128 is disordered; the sequence is RSEGFMTRDSRSVERKKPGQPKARRRFQFSKR. Basic residues predominate over residues 114–128; sequence PGQPKARRRFQFSKR.

The protein belongs to the universal ribosomal protein uS9 family.

This is Small ribosomal subunit protein uS9 from Phocaeicola vulgatus (strain ATCC 8482 / DSM 1447 / JCM 5826 / CCUG 4940 / NBRC 14291 / NCTC 11154) (Bacteroides vulgatus).